A 377-amino-acid polypeptide reads, in one-letter code: DNA replication and repair protein RecF (377 aa).

Residue 30-37 (GPNGVGKT) participates in ATP binding.

It belongs to the RecF family.

It is found in the cytoplasm. Its function is as follows. The RecF protein is involved in DNA metabolism; it is required for DNA replication and normal SOS inducibility. RecF binds preferentially to single-stranded, linear DNA. It also seems to bind ATP. This chain is DNA replication and repair protein RecF, found in Salinispora tropica (strain ATCC BAA-916 / DSM 44818 / JCM 13857 / NBRC 105044 / CNB-440).